The following is a 136-amino-acid chain: Protein NrdI (136 aa).

Belongs to the NrdI family.

Functionally, probably involved in ribonucleotide reductase function. The polypeptide is Protein NrdI (Salmonella typhi).